Here is a 573-residue protein sequence, read N- to C-terminus: 2-isopropylmalate synthase (573 aa).

The Pyruvate carboxyltransferase domain maps to 37–314 (PRWLSTDLRD…DPQIDFSDID (278 aa)). The Mg(2+) site is built by Asp46, His253, His255, and Asn289. Residues 456–573 (NPDNPWGRIQ…VVSAVNRATR (118 aa)) are regulatory domain.

This sequence belongs to the alpha-IPM synthase/homocitrate synthase family. LeuA type 2 subfamily. In terms of assembly, homodimer. Mg(2+) serves as cofactor.

The protein resides in the cytoplasm. The enzyme catalyses 3-methyl-2-oxobutanoate + acetyl-CoA + H2O = (2S)-2-isopropylmalate + CoA + H(+). It functions in the pathway amino-acid biosynthesis; L-leucine biosynthesis; L-leucine from 3-methyl-2-oxobutanoate: step 1/4. Functionally, catalyzes the condensation of the acetyl group of acetyl-CoA with 3-methyl-2-oxobutanoate (2-ketoisovalerate) to form 3-carboxy-3-hydroxy-4-methylpentanoate (2-isopropylmalate). This is 2-isopropylmalate synthase from Streptomyces coelicolor (strain ATCC BAA-471 / A3(2) / M145).